The following is a 183-amino-acid chain: Peptide deformylase (183 aa).

Fe cation-binding residues include cysteine 111 and histidine 154. The active site involves glutamate 155. Histidine 158 contributes to the Fe cation binding site.

It belongs to the polypeptide deformylase family. It depends on Fe(2+) as a cofactor.

The catalysed reaction is N-terminal N-formyl-L-methionyl-[peptide] + H2O = N-terminal L-methionyl-[peptide] + formate. Its function is as follows. Removes the formyl group from the N-terminal Met of newly synthesized proteins. Requires at least a dipeptide for an efficient rate of reaction. N-terminal L-methionine is a prerequisite for activity but the enzyme has broad specificity at other positions. The polypeptide is Peptide deformylase (Staphylococcus epidermidis (strain ATCC 35984 / DSM 28319 / BCRC 17069 / CCUG 31568 / BM 3577 / RP62A)).